The primary structure comprises 170 residues: RNA pyrophosphohydrolase (170 aa).

The Nudix hydrolase domain occupies 6–149; that stretch reads GFRPNVGIVI…KRDVYRRALK (144 aa). Residues 38 to 59 carry the Nudix box motif; that stretch reads GGIDDGETPEQAMYRELYEEVG.

It belongs to the Nudix hydrolase family. RppH subfamily. A divalent metal cation serves as cofactor.

Accelerates the degradation of transcripts by removing pyrophosphate from the 5'-end of triphosphorylated RNA, leading to a more labile monophosphorylated state that can stimulate subsequent ribonuclease cleavage. This Aliivibrio fischeri (strain ATCC 700601 / ES114) (Vibrio fischeri) protein is RNA pyrophosphohydrolase.